Reading from the N-terminus, the 213-residue chain is Response regulator GacA (213 aa).

Residues 3–119 (RVLVVDDHDL…EMVQAIRLVF (117 aa)) enclose the Response regulatory domain. 4-aspartylphosphate is present on Asp-54. In terms of domain architecture, HTH luxR-type spans 142-207 (SDSPFDALSE…ELTLLAVRHG (66 aa)). Positions 166 to 185 (VQIISDKLCLSPKTVNTYRY) form a DNA-binding region, H-T-H motif.

Post-translationally, phosphorylated by GacS.

Functionally, member of the two-component regulatory system GacA/GacS which controls the expression of secondary metabolites and extracellular products. Acts (probably primarily) by activating expression of CsrA1 and CsrA2 antagonist small RNAs (sRNA) RsmX, RsmY and RsmZ which bind to and prevent translation repression by CsrA1 and CsrA2. Involved in the regulation of secondary metabolism and in the synthesis of the antifungal factors cyanide, 2,4-diacetylphloroglucinol and pyoluteorin. Involved in synthesis of the autoinducing signal (unrelated to N-acylhomoserine lactones, induces the Gac/Csr cascade). Exercises positive post-transcriptional control over the hcnABC and aprA genes; acts upstream of CsrA2 (rsmA). Controls expression of csrA1 (rsmE) and csrA2. This chain is Response regulator GacA, found in Pseudomonas protegens (strain DSM 19095 / LMG 27888 / CFBP 6595 / CHA0).